A 181-amino-acid chain; its full sequence is Regulator of G-protein signaling 10 (181 aa).

The interval 1–35 is disordered; it reads MFTRAVSRLSRKRPPSDIHDGDGSSSSGHQSLKST. Residues Ser24 and Ser41 each carry the phosphoserine modification. An RGS domain is found at 41-156; that stretch reads SLENLLEDPE…LKSDLFLKHR (116 aa). A lipid anchor (S-palmitoyl cysteine) is attached at Cys74. Positions 157–181 are disordered; that stretch reads RTEEEEEDPPDAQTAAKRASRIYNT. Ser176 bears the Phosphoserine mark.

As to quaternary structure, interacts with GNAZ, GNAI1 and GNAI3. Associates specifically with the activated, GTP-bound forms of GNAZ and GNAI3.

The protein localises to the cytoplasm. Its subcellular location is the cytosol. It is found in the nucleus. Its function is as follows. Regulates G protein-coupled receptor signaling cascades, including signaling downstream of the muscarinic acetylcholine receptor CHRM2. Inhibits signal transduction by increasing the GTPase activity of G protein alpha subunits, thereby driving them into their inactive GDP-bound form. Modulates the activity of potassium channels that are activated in response to CHRM2 signaling. Activity on GNAZ is inhibited by palmitoylation of the G-protein. The sequence is that of Regulator of G-protein signaling 10 (Rgs10) from Rattus norvegicus (Rat).